We begin with the raw amino-acid sequence, 308 residues long: tRNA dimethylallyltransferase 1 (308 aa).

9-16 contributes to the ATP binding site; the sequence is GPTGVGKT. Substrate is bound at residue 11 to 16; sequence TGVGKT. The segment at 34-37 is interaction with substrate tRNA; it reads DSRQ.

This sequence belongs to the IPP transferase family. As to quaternary structure, monomer. Mg(2+) serves as cofactor.

It catalyses the reaction adenosine(37) in tRNA + dimethylallyl diphosphate = N(6)-dimethylallyladenosine(37) in tRNA + diphosphate. In terms of biological role, catalyzes the transfer of a dimethylallyl group onto the adenine at position 37 in tRNAs that read codons beginning with uridine, leading to the formation of N6-(dimethylallyl)adenosine (i(6)A). This Bacteroides thetaiotaomicron (strain ATCC 29148 / DSM 2079 / JCM 5827 / CCUG 10774 / NCTC 10582 / VPI-5482 / E50) protein is tRNA dimethylallyltransferase 1.